Consider the following 381-residue polypeptide: Queuine tRNA-ribosyltransferase (381 aa).

The active-site Proton acceptor is the D92. Substrate contacts are provided by residues 92–96 (DSGGF), D146, Q190, and G217. The RNA binding stretch occupies residues 248–254 (GVGRPED). The active-site Nucleophile is the D267. Positions 272–276 (TRNAR) are RNA binding; important for wobble base 34 recognition. Zn(2+) is bound by residues C305, C307, C310, and H337.

The protein belongs to the queuine tRNA-ribosyltransferase family. Homodimer. Within each dimer, one monomer is responsible for RNA recognition and catalysis, while the other monomer binds to the replacement base PreQ1. It depends on Zn(2+) as a cofactor.

It catalyses the reaction 7-aminomethyl-7-carbaguanine + guanosine(34) in tRNA = 7-aminomethyl-7-carbaguanosine(34) in tRNA + guanine. It functions in the pathway tRNA modification; tRNA-queuosine biosynthesis. Catalyzes the base-exchange of a guanine (G) residue with the queuine precursor 7-aminomethyl-7-deazaguanine (PreQ1) at position 34 (anticodon wobble position) in tRNAs with GU(N) anticodons (tRNA-Asp, -Asn, -His and -Tyr). Catalysis occurs through a double-displacement mechanism. The nucleophile active site attacks the C1' of nucleotide 34 to detach the guanine base from the RNA, forming a covalent enzyme-RNA intermediate. The proton acceptor active site deprotonates the incoming PreQ1, allowing a nucleophilic attack on the C1' of the ribose to form the product. After dissociation, two additional enzymatic reactions on the tRNA convert PreQ1 to queuine (Q), resulting in the hypermodified nucleoside queuosine (7-(((4,5-cis-dihydroxy-2-cyclopenten-1-yl)amino)methyl)-7-deazaguanosine). The polypeptide is Queuine tRNA-ribosyltransferase (Xanthomonas campestris pv. campestris (strain 8004)).